The chain runs to 182 residues: MAPTVLPASGNPLVFFDITLGGEPLGRITFELFKDVVPRTAENFRQFCTGESKNNLGRPQGYKGSKFHRIIPNFMCQGGDFLNGDGTGSTCIYGTKSFADENFLLKHDTPGLLSMANAGPNTNGSQFFITTVPTPFLDGKHVVFGKVVDGMDVVKKMENTKTGYRGKDVPNLDVVIAQCGEM.

One can recognise a PPIase cyclophilin-type domain in the interval 15–181; that stretch reads FFDITLGGEP…LDVVIAQCGE (167 aa).

Belongs to the cyclophilin-type PPIase family. PPIase H subfamily.

The protein resides in the nucleus. The enzyme catalyses [protein]-peptidylproline (omega=180) = [protein]-peptidylproline (omega=0). Its function is as follows. PPIases accelerate the folding of proteins. It catalyzes the cis-trans isomerization of proline imidic peptide bonds in oligopeptides. In Neurospora crassa (strain ATCC 24698 / 74-OR23-1A / CBS 708.71 / DSM 1257 / FGSC 987), this protein is Peptidyl-prolyl cis-trans isomerase H (cyp-3).